Here is a 504-residue protein sequence, read N- to C-terminus: Putative pentatricopeptide repeat-containing protein At3g28640 (504 aa).

PPR repeat units lie at residues 77 to 107 (NSFV…MVKE), 115 to 149 (SYLT…GVFL), 151 to 181 (DSHV…IPQP), 182 to 216 (DVVK…GLEP), 217 to 251 (DEFS…SWIE), 253 to 287 (DVFV…NVFS), 288 to 319 (WAAL…GIKP), 320 to 350 (DSVV…MEAR), and 356 to 390 (KHEH…PLAS). The interval 391–470 (VWGALLNGCR…TPGWSVLEVD (80 aa)) is type E motif. Positions 471–501 (GNVTKFVSGDVSHPNLLQIHTVIHLLSVDAL) are type E(+) motif.

It belongs to the PPR family. PCMP-E subfamily.

The protein is Putative pentatricopeptide repeat-containing protein At3g28640 (PCMP-E79) of Arabidopsis thaliana (Mouse-ear cress).